The following is a 261-amino-acid chain: Guanine nucleotide exchange factor BopE (261 aa).

This sequence belongs to the GEF (guanine exchange factor) SopE family. In terms of assembly, monomer. Interacts with human CDC42.

Its subcellular location is the secreted. Its function is as follows. Activator for both CDC42 and RAC1 by directly interacting with these Rho GTPases and acting as a guanine nucleotide exchange factor (GEF). This activation results in actin cytoskeleton rearrangements and stimulates membrane ruffling, thus promoting bacterial entry into non-phagocytic cells. This chain is Guanine nucleotide exchange factor BopE (bopE), found in Burkholderia pseudomallei (strain 1710b).